A 134-amino-acid polypeptide reads, in one-letter code: ATP synthase epsilon chain (134 aa).

This sequence belongs to the ATPase epsilon chain family. In terms of assembly, F-type ATPases have 2 components, CF(1) - the catalytic core - and CF(0) - the membrane proton channel. CF(1) has five subunits: alpha(3), beta(3), gamma(1), delta(1), epsilon(1). CF(0) has three main subunits: a, b and c.

The protein resides in the cellular thylakoid membrane. Functionally, produces ATP from ADP in the presence of a proton gradient across the membrane. The polypeptide is ATP synthase epsilon chain (Prochlorococcus marinus (strain MIT 9301)).